The sequence spans 400 residues: Capsid protein (400 aa).

The segment covering 1 to 10 has biased composition (polar residues); sequence MDPNLDQDTL. A disordered region spans residues 1–54; that stretch reads MDPNLDQDTLPTHEEIDNDVDSAEEEPPEPPLLPDDIDDDDSHGSRTRRQVKPP. The segment covering 16 to 28 has biased composition (acidic residues); that stretch reads IDNDVDSAEEEPP.

Belongs to the potexvirus capsid protein family.

Its subcellular location is the virion. Required for genome encapsidation. This chain is Capsid protein (ORF3), found in Botryotinia fuckeliana (Noble rot fungus).